Here is a 185-residue protein sequence, read N- to C-terminus: Lactoylglutathione lyase (185 aa).

The disordered stretch occupies residues 1–21; the sequence is MAAEPKESPSNNPGLHTTPDE. The region spanning 27–174 is the VOC domain; it reads IMQQTMFRIK…DGYWIEIFDR (148 aa). Substrate-binding residues include Q30 and R34. Q30 is a binding site for Zn(2+). A Zn(2+)-binding site is contributed by E96. Substrate is bound by residues N100, R120, H124, and 154–155; that span reads KM. H124 contacts Zn(2+). E170 provides a ligand contact to Zn(2+). E170 acts as the Proton donor/acceptor in catalysis.

Belongs to the glyoxalase I family. In terms of assembly, homodimer. The cofactor is Zn(2+).

It carries out the reaction (R)-S-lactoylglutathione = methylglyoxal + glutathione. It functions in the pathway secondary metabolite metabolism; methylglyoxal degradation; (R)-lactate from methylglyoxal: step 1/2. In terms of biological role, catalyzes the conversion of hemimercaptal, formed from methylglyoxal and glutathione, to S-lactoylglutathione. Active toward the hemithioacetal adducts formed by reacting methylglyoxal or phenylglyoxal with glutathione, homoglutathione or gamma-glutamylcysteine, showing no preference for homoglutathione adducts over glutathione adducts. The chain is Lactoylglutathione lyase (GLXI) from Glycine max (Soybean).